A 154-amino-acid polypeptide reads, in one-letter code: Large ribosomal subunit protein uL13 (154 aa).

The protein belongs to the universal ribosomal protein uL13 family. In terms of assembly, part of the 50S ribosomal subunit.

Its function is as follows. This protein is one of the early assembly proteins of the 50S ribosomal subunit, although it is not seen to bind rRNA by itself. It is important during the early stages of 50S assembly. This chain is Large ribosomal subunit protein uL13, found in Rhizobium leguminosarum bv. trifolii (strain WSM2304).